The primary structure comprises 520 residues: GMP synthase [glutamine-hydrolyzing] (520 aa).

Residues 12–205 (KIIVLDYGSQ…AIFICGARGD (194 aa)) enclose the Glutamine amidotransferase type-1 domain. Cys89 serves as the catalytic Nucleophile. Active-site residues include His179 and Glu181. Residues 206-395 (WSMDNFIDMQ…LGMPENIVWR (190 aa)) form the GMPS ATP-PPase domain. ATP is bound at residue 233–239 (SGGVDSS).

Homodimer.

The enzyme catalyses XMP + L-glutamine + ATP + H2O = GMP + L-glutamate + AMP + diphosphate + 2 H(+). It participates in purine metabolism; GMP biosynthesis; GMP from XMP (L-Gln route): step 1/1. In terms of biological role, catalyzes the synthesis of GMP from XMP. This chain is GMP synthase [glutamine-hydrolyzing], found in Streptococcus uberis (strain ATCC BAA-854 / 0140J).